A 110-amino-acid chain; its full sequence is U1-lycotoxin-Ls1ee (110 aa).

The signal sequence occupies residues 1-20 (MKFVLLFGVLLVTLFSYSSA). Residues 21–44 (EMLDDFDQADEDELLSLIEKEEAR) constitute a propeptide that is removed on maturation. 4 cysteine pairs are disulfide-bonded: C47-C62, C54-C71, C61-C89, and C73-C87.

Belongs to the neurotoxin 19 (CSTX) family. 03 subfamily. Expressed by the venom gland.

The protein resides in the secreted. This chain is U1-lycotoxin-Ls1ee, found in Lycosa singoriensis (Wolf spider).